The following is a 104-amino-acid chain: Protein SMALL AUXIN UP-REGULATED RNA 12 (104 aa).

The protein belongs to the ARG7 family. As to expression, expressed in flowers and etiolated hypocotyls.

It localises to the cell membrane. Its function is as follows. Provide a mechanistic link between auxin and plasma membrane H(+)-ATPases (PM H(+)-ATPases, e.g. AHA1 and AHA2), and triggers PM H(+)-ATPases activity by promoting phosphorylation of their C-terminal autoinhibitory domain as a result of PP2C-D subfamily of type 2C phosphatases inhibition, thus leading to the acidification of the apoplast and the facilitation of solutes and water uptake to drive cell expansion. Triggers plant growth probably by promoting cell elongation. Regulates branch angles and bending. The chain is Protein SMALL AUXIN UP-REGULATED RNA 12 from Arabidopsis thaliana (Mouse-ear cress).